We begin with the raw amino-acid sequence, 1203 residues long: Chromosome partition protein Smc (1203 aa).

32 to 39 (PNGSGKSN) contributes to the ATP binding site. Coiled coils occupy residues 167–203 (ILKYRRRKEKALRKLDAMSANLARLTDLTTELRRQLK), 250–288 (MMRRDHDEAAARLAVASEELAAHEAALTELSGRAESVQQ), and 327–497 (DVLE…LERK). In terms of domain architecture, SMC hinge spans 511 to 622 (GLLGSIAKLV…VVNYLAEALG (112 aa)). Coiled-coil stretches lie at residues 657–689 (EVTSEIDKAGAELAAAEAHMAQLNAALSGALSE), 720–765 (RLGQ…NVEQ), and 976–1030 (YDRA…RKDL).

The protein belongs to the SMC family. Homodimer.

The protein localises to the cytoplasm. Required for chromosome condensation and partitioning. In Mycobacterium leprae (strain TN), this protein is Chromosome partition protein Smc.